The chain runs to 591 residues: L-fucose isomerase (591 aa).

Catalysis depends on proton acceptor residues glutamate 337 and aspartate 361. 3 residues coordinate Mn(2+): glutamate 337, aspartate 361, and histidine 528.

It belongs to the L-fucose isomerase family. As to quaternary structure, homohexamer. Requires Mn(2+) as cofactor.

The protein localises to the cytoplasm. The enzyme catalyses L-fucose = L-fuculose. Its pathway is carbohydrate degradation; L-fucose degradation; L-lactaldehyde and glycerone phosphate from L-fucose: step 1/3. Functionally, converts the aldose L-fucose into the corresponding ketose L-fuculose. The polypeptide is L-fucose isomerase (Salmonella choleraesuis (strain SC-B67)).